A 103-amino-acid chain; its full sequence is Large ribosomal subunit protein bL21 (103 aa).

The protein belongs to the bacterial ribosomal protein bL21 family. As to quaternary structure, part of the 50S ribosomal subunit. Contacts protein L20.

Functionally, this protein binds to 23S rRNA in the presence of protein L20. The chain is Large ribosomal subunit protein bL21 from Clostridioides difficile (strain 630) (Peptoclostridium difficile).